Consider the following 152-residue polypeptide: uncharacterized protein (152 aa).

In terms of domain architecture, HTH marR-type spans 3–143; sequence EQKLCQAINL…IIEIFTILKS (141 aa). The H-T-H motif DNA-binding region spans 55–78; sequence PGSLAMYQNVHKSAISNRLKKLLE.

This is an uncharacterized protein from Bacillus subtilis (strain 168).